The chain runs to 715 residues: Scinderin (715 aa).

Residues 1–363 are actin-severing; sequence MARELYHEEF…DGFGKVYVTE (363 aa). The stretch at 27 to 76 is one Gelsolin-like 1 repeat; the sequence is LELVPVPQSAHGDFYVGDAYLVLHTAKTSRGFTYHLHFWLGKECSQDEST. Position 102 is a phosphotyrosine (Y102). A 1,2-diacyl-sn-glycero-3-phospho-(1D-myo-inositol-4,5-bisphosphate) is bound by residues 112–119 and 138–146; these read KGGLKYKA and RLLHVKGRR. Gelsolin-like repeat units follow at residues 148–188, 265–307, 398–451, and 523–564; these read VRAT…YERL, VVAE…QERK, VEIW…DELT, and TRIV…EEEK. The segment at 364-715 is ca(2+)-dependent actin binding; the sequence is KVAQIKQIPF…WFLGWDSSKW (352 aa). 3 residues coordinate Ca(2+): N538, D539, and E562. Y599 is subject to Phosphotyrosine. A Gelsolin-like 6 repeat occupies 626 to 668; sequence FVIEEIPGEFTQDDLAEDDVMLLDAWEQIFIWIGKDANEVEKK. Residues D643, D644, and E666 each contribute to the Ca(2+) site.

The protein belongs to the villin/gelsolin family. In terms of tissue distribution, expressed in megakaryocytes.

It is found in the cytoplasm. The protein localises to the cytoskeleton. It localises to the cell projection. Its subcellular location is the podosome. In terms of biological role, ca(2+)-dependent actin filament-severing protein that has a regulatory function in exocytosis by affecting the organization of the microfilament network underneath the plasma membrane. Severing activity is inhibited by phosphatidylinositol 4,5-bis-phosphate (PIP2). In vitro, also has barbed end capping and nucleating activities in the presence of Ca(2+). Required for megakaryocyte differentiation, maturation, polyploidization and apoptosis with the release of platelet-like particles. Plays a role in osteoclastogenesis (OCG) and actin cytoskeletal organization in osteoclasts. Regulates chondrocyte proliferation and differentiation. Inhibits cell proliferation and tumorigenesis. Signaling is mediated by MAPK, p38 and JNK pathways. The sequence is that of Scinderin from Homo sapiens (Human).